The primary structure comprises 1563 residues: Rab-3-interacting molecule unc-10 (1563 aa).

The RabBD domain maps to 7–133 (MPDLSHLSAE…AKTGKWFQPE (127 aa)). Basic and acidic residues predominate over residues 25–35 (FKRQKDEEAKE). Residues 25-50 (FKRQKDEEAKETQISQKASEELSELD) form a disordered region. Residues 66–121 (TQDDAICQICQKTKFADGIGHKCFYCQLRSCARCGGRAQSKNKAIWACSLCQKRQQ) form an FYVE-type zinc finger. Residues C72, C75, C88, C91, C96, C99, C113, and C116 each coordinate Zn(2+). 2 disordered regions span residues 128–466 (KWFQ…DHLN) and 582–605 (GGLD…RNDH). Polar residues predominate over residues 172-182 (NTPNYQNNQQP). 2 stretches are compositionally biased toward low complexity: residues 190–284 (NHNQ…RNQT) and 300–316 (QTPQ…VGAA). The segment covering 326–345 (QEQHHQQMNEQRTDNNRMRE) has biased composition (basic and acidic residues). Polar residues-rich tracts occupy residues 356–367 (RQPSLEQTTPMN) and 379–389 (QRPTFYTGNSE). Residues 395–415 (FDGQMQQGSQQNNQNQNQNNR) are compositionally biased toward low complexity. In terms of domain architecture, PDZ spans 643–733 (HMILHRTENS…DTSVELIVSR (91 aa)). The C2 1 domain maps to 840–962 (IFGRIEVSFV…PLDGEHSLMC (123 aa)). 3 disordered regions span residues 1054–1163 (ENDI…YLGD), 1177–1311 (GQMT…GGSA), and 1346–1373 (VGIP…KEST). A compositionally biased stretch (polar residues) spans 1086–1097 (WTQNHQRQSGYT). The span at 1112–1121 (YNRRQQRRPR) shows a compositional bias: basic residues. Residues 1129-1154 (MEREDMYDPTRKHRDDNEYSMRESVR) show a composition bias toward basic and acidic residues. Residues 1181 to 1230 (PKQHNQQHQPHPLSQAHQQQQTAGVQPQHHQGFQQQQHPQQPNQQMQQMQ) are compositionally biased toward low complexity. The span at 1242 to 1255 (GSETLSVHSTNSMP) shows a compositional bias: polar residues. The span at 1256-1277 (TTMTTVNRRNMNANNTSNDNTS) shows a compositional bias: low complexity. Polar residues predominate over residues 1278–1288 (FAETPTANTNR). Low complexity predominate over residues 1297 to 1311 (NSLASSSSVAGGGSA). Positions 1417-1536 (VLGEIQIALM…LGSQPLIGWY (120 aa)) constitute a C2 2 domain.

As to expression, restricted to discrete puncta in synapse-rich regions of the nervous system including the nerve ring, the ventral nerve cord and the dorsal nerve cord. Localized expression was found in the head.

It is found in the synapse. In terms of biological role, regulates the efficiency of a post-docking step of the release pathway. Acts after vesicle docking likely via regulating priming. May regulate the conformational changes in syntaxin. Binding of vesicles via rab-3[GTP] to Rim may signal the presence of a docked synaptic vesicle. Rim may then signal to unc-13 to change the conformation of syntaxin from the closed to the open state. Syntaxin could then engage synaptobrevin on the docked vesicle to form SNARE complexes and to prime the vesicle for release. Not required for the development or the structural organization of synapses. May play a role in regulating entry into the dauer state. This Caenorhabditis elegans protein is Rab-3-interacting molecule unc-10.